The sequence spans 46 residues: Large ribosomal subunit protein bL34 (46 aa).

This sequence belongs to the bacterial ribosomal protein bL34 family.

This is Large ribosomal subunit protein bL34 from Trichodesmium erythraeum (strain IMS101).